A 73-amino-acid polypeptide reads, in one-letter code: MRKDIHPEYHKINAVCACGNEVELGSVETEMKVEICSACHPFFTGKQKLIDTAGRIEKFKQRYAKHFEKKAEA.

Zn(2+) contacts are provided by Cys16, Cys18, Cys36, and Cys39.

Belongs to the bacterial ribosomal protein bL31 family. Type A subfamily. As to quaternary structure, part of the 50S ribosomal subunit. Requires Zn(2+) as cofactor.

Binds the 23S rRNA. This Desulfotalea psychrophila (strain LSv54 / DSM 12343) protein is Large ribosomal subunit protein bL31.